We begin with the raw amino-acid sequence, 296 residues long: Inactive uridine phosphorylase B (296 aa).

This sequence belongs to the PNP/UDP phosphorylase family. As to quaternary structure, homodimer.

The sequence is that of Inactive uridine phosphorylase B from Schistosoma mansoni (Blood fluke).